The primary structure comprises 153 residues: Ribosome maturation factor RimP (153 aa).

It belongs to the RimP family.

It is found in the cytoplasm. Functionally, required for maturation of 30S ribosomal subunits. This Marinobacter nauticus (strain ATCC 700491 / DSM 11845 / VT8) (Marinobacter aquaeolei) protein is Ribosome maturation factor RimP.